Reading from the N-terminus, the 452-residue chain is Probable diguanylate cyclase DgcT (452 aa).

Over 1–7 (MEKDYLR) the chain is Cytoplasmic. Residues 8-28 (ISSTVLVSLLFGLALVLVNSW) traverse the membrane as a helical segment. The Periplasmic segment spans residues 29–45 (FNQPGVEEVVPRSTYLM). A helical membrane pass occupies residues 46 to 66 (VMIALFFIDTVAFIFMQLYFI). The Cytoplasmic portion of the chain corresponds to 67–74 (YDRRQFSN). Residues 75 to 95 (CVLSLAFLSCLIYFVITVIII) traverse the membrane as a helical segment. Residues 96 to 111 (QQIIEERLTSSVVQND) lie on the Periplasmic side of the membrane. Residues 112 to 132 (IAIYYLFRQMSLCILIFLALV) traverse the membrane as a helical segment. Topologically, residues 133–148 (NKVSENTKQRNLFSKK) are cytoplasmic. The chain crosses the membrane as a helical span at residues 149–169 (MTLCISLFFVFGGPIVAHILS). Residues 170–195 (SHYESYNLHIAELTNENGQVVWKASY) lie on the Periplasmic side of the membrane. Residues 196–216 (VTIMIFMWLTLLSVNLYFNGL) form a helical membrane-spanning segment. The Cytoplasmic portion of the chain corresponds to 217–219 (RYD). Residues 220-240 (IWNGVTVIAFCAVLYNISLLF) traverse the membrane as a helical segment. Over 241–254 (MSRYSVSTWYISRT) the chain is Periplasmic. Residues 255–275 (IEVVSKLTVMVIFMCHIFSAL) form a helical membrane-spanning segment. The Cytoplasmic segment spans residues 276 to 452 (RVTKNIAHRD…RDVVNFCESP (177 aa)). Positions 310 to 445 (TPYCVMIMDI…GRNKVVVRDV (136 aa)) constitute a GGDEF domain. Mg(2+) is bound by residues aspartate 318 and isoleucine 319. Residues asparagine 326, histidine 331, and aspartate 335 each coordinate substrate. Residue glutamate 361 participates in Mg(2+) binding. Catalysis depends on glutamate 361, which acts as the Proton acceptor. Arginine 381 serves as a coordination point for substrate.

In terms of assembly, homodimer. Requires Mg(2+) as cofactor.

Its subcellular location is the cell inner membrane. The catalysed reaction is 2 GTP = 3',3'-c-di-GMP + 2 diphosphate. It functions in the pathway purine metabolism; 3',5'-cyclic di-GMP biosynthesis. Probably catalyzes the synthesis of cyclic-di-GMP (c-di-GMP) via the condensation of 2 GTP molecules. Overexpression leads to a strong repression of swimming; swimming returns to normal when residues 359-360 are both mutated to Ala. Overexpression also leads to a 20-fold increase in c-di-GMP levels in vivo. Cyclic-di-GMP is a second messenger which controls cell surface-associated traits in bacteria. This is Probable diguanylate cyclase DgcT from Escherichia coli (strain K12).